A 590-amino-acid polypeptide reads, in one-letter code: Aspartate--tRNA ligase (590 aa).

Residue glutamate 174 participates in L-aspartate binding. The tract at residues glutamine 198–lysine 201 is aspartate. Arginine 220 provides a ligand contact to L-aspartate. ATP contacts are provided by residues arginine 220 to glutamate 222 and glutamine 229. Histidine 443 is an L-aspartate binding site. An ATP-binding site is contributed by glutamate 484. Residue arginine 491 participates in L-aspartate binding. Glycine 536–arginine 539 serves as a coordination point for ATP.

The protein belongs to the class-II aminoacyl-tRNA synthetase family. Type 1 subfamily. In terms of assembly, homodimer.

The protein resides in the cytoplasm. It catalyses the reaction tRNA(Asp) + L-aspartate + ATP = L-aspartyl-tRNA(Asp) + AMP + diphosphate. Its function is as follows. Catalyzes the attachment of L-aspartate to tRNA(Asp) in a two-step reaction: L-aspartate is first activated by ATP to form Asp-AMP and then transferred to the acceptor end of tRNA(Asp). This chain is Aspartate--tRNA ligase, found in Lactococcus lactis subsp. cremoris (strain SK11).